Here is a 193-residue protein sequence, read N- to C-terminus: uncharacterized protein (193 aa).

Arginine 8 is a binding site for substrate. Histidine 9 functions as the Tele-phosphohistidine intermediate in the catalytic mechanism. The substrate site is built by asparagine 15, glutamine 21, and arginine 58. The Proton donor/acceptor role is filled by glutamate 82. Substrate is bound at residue histidine 139.

The protein belongs to the phosphoglycerate mutase family. GpmB subfamily.

Functionally, phosphatase with broad substrate specificity. Does not have phosphoglycerate mutase activity. This is an uncharacterized protein from Bacillus subtilis (strain 168).